The primary structure comprises 1893 residues: Transcription initiation factor TFIID subunit 1 (1893 aa).

Residues 1–435 enclose the Protein kinase 1 domain; the sequence is MGPGCDLLLR…VTQLHWEDDI (435 aa). Serine 137 bears the Phosphoserine; by autocatalysis mark. Disordered stretches follow at residues 155–184 and 197–224; these read LMPPPPPPPGPMKKDKDQDSITGVSENGEG and ASEKVDFSSSSDSESEMGPQEATQAESE. A compositionally biased stretch (pro residues) spans 156–165; the sequence is MPPPPPPPGP. Positions 197–208 are enriched in low complexity; sequence ASEKVDFSSSSD. Serine 328 carries the post-translational modification Phosphoserine; by autocatalysis. The segment at 534–557 is disordered; sequence IPDEKEEATSNSPSKESKKESSLK. A histone acetyltransferase (HAT) region spans residues 538–997; sequence KEEATSNSPS…KIPNKPTQQK (460 aa). Residue lysine 565 is modified to N6-acetyllysine. Residues lysine 570 and lysine 583 each participate in a glycyl lysine isopeptide (Lys-Gly) (interchain with G-Cter in SUMO2) cross-link. Disordered stretches follow at residues 990–1009, 1128–1148, 1158–1177, and 1254–1278; these read PNKPTQQKDDKEPQPVKKTV, MLQNKKTSSQLSREREEQERK, GSAASGNNHRDDDTASVTSL, and RLKRNQEKEKLKGPPEKKPKKMKER. 2 stretches are compositionally biased toward basic and acidic residues: residues 995-1004 and 1139-1148; these read QQKDDKEPQP and SREREEQERK. Residues 1216–1294 constitute a DNA-binding region (HMG box; involved in promoter binding); sequence VRIRTTKDEE…CGACGAIGHM (79 aa). Positions 1254-1270 are enriched in basic and acidic residues; the sequence is RLKRNQEKEKLKGPPEK. Residues 1363–1650 form an interaction with ASF1A and ASF1B region; that stretch reads VLKFPKQQLP…TAKEAALEEA (288 aa). The Nuclear localization signal motif lies at 1372 to 1379; it reads PPKKKRRV. Bromo domains are found at residues 1397–1505 and 1519–1628; these read RRRT…LKEK and LLDD…LTEY. Residues 1446 to 1893 form the Protein kinase 2 domain; the sequence is MDLQTLRENV…AGDSDLDSDE (448 aa). Positions 1651 to 1676 are disordered; sequence ELESLDPMTPGPYTPQPPDLYDTNTS. Pro residues predominate over residues 1659–1668; sequence TPGPYTPQPP. Phosphoserine occurs at positions 1690, 1693, 1718, 1721, and 1723. The disordered stretch occupies residues 1696 to 1893; the sequence is DIPSATPEKQ…AGDSDLDSDE (198 aa). Acidic residues-rich tracts occupy residues 1709–1723 and 1741–1756; these read EGEDGDGDLADEEEG and EGEDDEEDAGSDEEGD. Phosphoserine occurs at positions 1799, 1802, and 1820. Positions 1830–1840 are enriched in polar residues; it reads KSNTQDTSFSS. Residues 1846-1857 are compositionally biased toward acidic residues; that stretch reads VSEEEEDEEEEE. Serine 1847 carries the post-translational modification Phosphoserine. Residues 1860 to 1869 are compositionally biased toward polar residues; that stretch reads SGPSVLSQVH.

The protein belongs to the TAF1 family. As to quaternary structure, component of the TFIID basal transcription factor complex, composed of TATA-box-binding protein TBP, and a number of TBP-associated factors (TAFs), including TAF1, TAF2, TAF3, TAF4, TAF5, TAF6, TAF7, TAF8, TAF9, TAF10, TAF11, TAF12 and TAF13. Interacts with TAF7; the interaction is direct. TAF1, when part of the TFIID complex, interacts with C-terminus of TP53. Part of a TFIID-containing RNA polymerase II pre-initiation complex that is composed of TBP and at least GTF2A1, GTF2A2, GTF2E1, GTF2E2, GTF2F1, GTF2H2, GTF2H3, GTF2H4, GTF2H5, GTF2B, TCEA1, ERCC2, ERCC3, TAF1, TAF2, TAF3, TAF4, TAF5, TAF6, TAF7, TAF8, TAF9, TAF10, TAF11, TAF12 and TAF13. Component of some MLL1/MLL complex, at least composed of the core components KMT2A/MLL1, ASH2L, HCFC1/HCF1, WDR5 and RBBP5, as well as the facultative components BACC1, CHD8, E2F6, HSP70, INO80C, KANSL1, LAS1L, MAX, MCRS1, MGA, KAT8/MOF, PELP1, PHF20, PRP31, RING2, RUVB1/TIP49A, RUVB2/TIP49B, SENP3, TAF1, TAF4, TAF6, TAF7, TAF9 and TEX10. RB1 interacts with the N-terminal domain of TAF1. Interacts with ASF1A and ASF1B. Interacts (via bromo domains) with acetylated lysine residues on the N-terminus of histone H1.4, H2A, H2B, H3 and H4 (in vitro). In terms of assembly, (Microbial infection) Interacts with SV40 Large T antigen. (Microbial infection) Interacts with herpes simplex virus 1 ICP4. The cofactor is Mg(2+). Phosphorylated by casein kinase II in vitro.

Its subcellular location is the nucleus. It catalyses the reaction L-seryl-[protein] + ATP = O-phospho-L-seryl-[protein] + ADP + H(+). The enzyme catalyses L-threonyl-[protein] + ATP = O-phospho-L-threonyl-[protein] + ADP + H(+). The catalysed reaction is L-lysyl-[protein] + acetyl-CoA = N(6)-acetyl-L-lysyl-[protein] + CoA + H(+). With respect to regulation, autophosphorylates on Ser residues. Inhibited by retinoblastoma tumor suppressor protein, RB1. Binding to TAF7 or CIITA inhibits the histone acetyltransferase activity. Its function is as follows. The TFIID basal transcription factor complex plays a major role in the initiation of RNA polymerase II (Pol II)-dependent transcription. TFIID recognizes and binds promoters with or without a TATA box via its subunit TBP, a TATA-box-binding protein, and promotes assembly of the pre-initiation complex (PIC). The TFIID complex consists of TBP and TBP-associated factors (TAFs), including TAF1, TAF2, TAF3, TAF4, TAF5, TAF6, TAF7, TAF8, TAF9, TAF10, TAF11, TAF12 and TAF13. TAF1 is the largest component and core scaffold of the TFIID complex, involved in nucleating complex assembly. TAF1 forms a promoter DNA binding subcomplex of TFIID, together with TAF7 and TAF2. Contains novel N- and C-terminal Ser/Thr kinase domains which can autophosphorylate or transphosphorylate other transcription factors. Phosphorylates TP53 on 'Thr-55' which leads to MDM2-mediated degradation of TP53. Phosphorylates GTF2A1 and GTF2F1 on Ser residues. Possesses DNA-binding activity. Essential for progression of the G1 phase of the cell cycle. Exhibits histone acetyltransferase activity towards histones H3 and H4. In Homo sapiens (Human), this protein is Transcription initiation factor TFIID subunit 1.